We begin with the raw amino-acid sequence, 505 residues long: Sucrose porin (505 aa).

Positions 1–22 (MYKKRKLAILIALLTGTAAAHG) are cleaved as a signal peptide. The tract at residues 44 to 94 (ETRASTAESRAASAEQKVQQLTQQQQQTQATTQQVARRTTQLEEKAERPGG) is disordered. The span at 46 to 82 (RASTAESRAASAEQKVQQLTQQQQQTQATTQQVARRT) shows a compositional bias: low complexity. Residues 83-93 (TQLEEKAERPG) are compositionally biased toward basic and acidic residues.

Belongs to the porin LamB (TC 1.B.3) family. As to quaternary structure, homotrimer.

It localises to the cell outer membrane. In terms of biological role, porin for sucrose uptake. In Klebsiella pneumoniae, this protein is Sucrose porin (scrY).